The following is a 212-amino-acid chain: Adenylate kinase (212 aa).

Glycine 10 to threonine 15 contributes to the ATP binding site. The tract at residues serine 30–valine 59 is NMP. AMP is bound by residues threonine 31, arginine 36, glutamate 57–valine 59, glycine 86–arginine 89, and glutamine 93. The segment at glycine 127–aspartate 159 is LID. ATP contacts are provided by residues arginine 128 and threonine 137–phenylalanine 138. Residues arginine 156 and arginine 167 each coordinate AMP. Glutamine 195 contacts ATP.

The protein belongs to the adenylate kinase family. Monomer.

The protein localises to the cytoplasm. The catalysed reaction is AMP + ATP = 2 ADP. Its pathway is purine metabolism; AMP biosynthesis via salvage pathway; AMP from ADP: step 1/1. Catalyzes the reversible transfer of the terminal phosphate group between ATP and AMP. Plays an important role in cellular energy homeostasis and in adenine nucleotide metabolism. The chain is Adenylate kinase from Streptococcus sanguinis (strain SK36).